The sequence spans 707 residues: Acetyl-coenzyme A synthetase 1 (707 aa).

Residues 242 to 245 and Thr-361 contribute to the CoA site; that span reads RGGK. ATP-binding positions include 437 to 439, 461 to 466, Asp-553, and Arg-568; these read GEP and DTYWQT. Ser-576 is a CoA binding site. ATP is bound at residue Arg-579. Residue Arg-644 participates in CoA binding. A Microbody targeting signal motif is present at residues 705–707; sequence VKL.

This sequence belongs to the ATP-dependent AMP-binding enzyme family.

It localises to the microsome. The protein resides in the endoplasmic reticulum. It catalyses the reaction acetate + ATP + CoA = acetyl-CoA + AMP + diphosphate. May be required for assimilation of ethanol and acetate. This is Acetyl-coenzyme A synthetase 1 (ACS1) from Kluyveromyces lactis (strain ATCC 8585 / CBS 2359 / DSM 70799 / NBRC 1267 / NRRL Y-1140 / WM37) (Yeast).